Consider the following 727-residue polypeptide: Pre-B-cell leukemia transcription factor-interacting protein 1 (727 aa).

A compositionally biased stretch (polar residues) spans 1-10; that stretch reads MASCPDSDNS. Residues 1-169 form a disordered region; the sequence is MASCPDSDNS…GREPSSSQPV (169 aa). A phosphoserine mark is found at S131, S142, S143, and S144. Residue T148 is modified to Phosphothreonine. S164 is subject to Phosphoserine. Coiled coils occupy residues 270–350 and 377–405; these read FLLD…RGVD and DPSLLEQHKQLEAEAKALRQELQRQWQLL. The span at 446-456 shows a compositional bias: polar residues; it reads QGINTGRSPND. Disordered regions lie at residues 446-565 and 694-727; these read QGIN…NSPD and LKKRSRKKEKHSWNPRVVGPREEHSRHPHHYHQG. The segment covering 473–563 has biased composition (basic and acidic residues); the sequence is WGGKEKWRGG…QKHSWGKDNS (91 aa). A Nuclear localization signal motif is present at residues 486–506; sequence QKAEHWKPRKEESGQERQRSW. S563 carries the post-translational modification Phosphoserine. The short motif at 691 to 716 is the Nuclear localization signal element; that stretch reads DKALKKRSRKKEKHSWNPRVVGPREE. The segment covering 694 to 703 has biased composition (basic residues); the sequence is LKKRSRKKEK.

As to quaternary structure, interacts with ESR1, PBX1, PBX2 and PBX3. Interacts with TEX11.

It is found in the cytoplasm. The protein resides in the cytoskeleton. It localises to the nucleus. Its function is as follows. Regulator of pre-B-cell leukemia transcription factors (BPXs) function. Inhibits the binding of PBX1-HOX complex to DNA and blocks the transcriptional activity of E2A-PBX1. Tethers estrogen receptor-alpha (ESR1) to microtubules and allows them to influence estrogen receptors-alpha signaling. This chain is Pre-B-cell leukemia transcription factor-interacting protein 1 (Pbxip1), found in Mus musculus (Mouse).